The following is a 773-amino-acid chain: Protein FAM149A (773 aa).

Composition is skewed to low complexity over residues 18–37 (TSTAPPAGPSSRPSGGAAAA) and 54–90 (LLRALAPDSPSASRRSPAPLLSSPYSRGSAASRAAGA). Disordered regions lie at residues 18–155 (TSTA…RELG), 173–210 (DIGEEGASDGDSGDGEARGLSEGRRRHGFTVRSKDSLP), 232–264 (FSSSGSHTPTGAHTSWSGSATQSSTTGSSTERG), and 568–613 (TQNE…PWRL). Residues 174-186 (IGEEGASDGDSGD) are compositionally biased toward acidic residues. Positions 245 to 264 (TSWSGSATQSSTTGSSTERG) are enriched in low complexity.

Belongs to the FAM149 family.

The sequence is that of Protein FAM149A (FAM149A) from Homo sapiens (Human).